A 394-amino-acid polypeptide reads, in one-letter code: Immune-associated nucleotide-binding protein 12 (394 aa).

One can recognise an AIG1-type G domain in the interval 45-251 (KPARTLLLVG…YMADLSHEIR (207 aa)). The G1 stretch occupies residues 54 to 61 (GRSGNGKS). Residues 54–62 (GRSGNGKSA) and Ser-75 contribute to the GTP site. Residues 81–85 (GVTTA) form a G2 region. Positions 103-106 (DTPG) are G3. Positions 173–176 (TNED) are G4. The tract at residues 210-212 (RNR) is G5. GTP is bound at residue Asn-211. The stretch at 289–387 (NQQLRQMMER…KQMATDLQKS (99 aa)) forms a coiled coil.

The protein belongs to the TRAFAC class TrmE-Era-EngA-EngB-Septin-like GTPase superfamily. AIG1/Toc34/Toc159-like paraseptin GTPase family. IAN subfamily.

This chain is Immune-associated nucleotide-binding protein 12, found in Arabidopsis thaliana (Mouse-ear cress).